Here is a 940-residue protein sequence, read N- to C-terminus: Valine--tRNA ligase (940 aa).

The 'HIGH' region motif lies at P47–H57. The 'KMSKS' region motif lies at K564–S568. ATP is bound at residue K567. The stretch at P872–S938 forms a coiled coil.

This sequence belongs to the class-I aminoacyl-tRNA synthetase family. ValS type 1 subfamily. As to quaternary structure, monomer.

The protein resides in the cytoplasm. It catalyses the reaction tRNA(Val) + L-valine + ATP = L-valyl-tRNA(Val) + AMP + diphosphate. Catalyzes the attachment of valine to tRNA(Val). As ValRS can inadvertently accommodate and process structurally similar amino acids such as threonine, to avoid such errors, it has a 'posttransfer' editing activity that hydrolyzes mischarged Thr-tRNA(Val) in a tRNA-dependent manner. The polypeptide is Valine--tRNA ligase (Chlamydia felis (strain Fe/C-56) (Chlamydophila felis)).